Reading from the N-terminus, the 528-residue chain is Tyrosine--tRNA ligase, cytoplasmic (528 aa).

The residue at position 1 (M1) is an N-acetylmethionine. At G2 the chain carries N-acetylglycine; in Tyrosine--tRNA ligase, cytoplasmic, N-terminally processed. Y39 serves as a coordination point for L-tyrosine. Y39 lines the trans-resveratrol pocket. Positions 44-52 (TTGKPHVAY) match the 'HIGH' region motif. L-tyrosine contacts are provided by Y166, Q170, D173, and Q188. The trans-resveratrol site is built by Q170 and D173. N6-acetyllysine is present on K197. At S205 the chain carries Phosphoserine. K206 carries the N6-acetyllysine modification. Residues 222–226 (KMSSS) carry the 'KMSKS' region motif. Positions 242–247 (KKKLKK) match the Nuclear localization signal motif. The segment at 339–363 (AAYPDPSKQKPTAKGPAKSSEPEEI) is disordered. The region spanning 364–468 (IPSRLDIRVG…AGSAPGERVF (105 aa)) is the tRNA-binding domain. S386 is subject to Phosphoserine. N6-acetyllysine is present on residues K474, K482, and K490.

Belongs to the class-I aminoacyl-tRNA synthetase family. Homodimer. Interacts (when binding to resveratrol) with PARP1; interaction stimulates the poly-ADP-ribosyltransferase activity of PARP1.

The protein resides in the cytoplasm. Its subcellular location is the nucleus. It catalyses the reaction tRNA(Tyr) + L-tyrosine + ATP = L-tyrosyl-tRNA(Tyr) + AMP + diphosphate + H(+). With respect to regulation, resveratrol strongly inhibits the tyrosine--tRNA ligase activity. Functionally, tyrosine--tRNA ligase that catalyzes the attachment of tyrosine to tRNA(Tyr) in a two-step reaction: tyrosine is first activated by ATP to form Tyr-AMP and then transferred to the acceptor end of tRNA(Tyr). Also acts as a positive regulator of poly-ADP-ribosylation in the nucleus, independently of its tyrosine--tRNA ligase activity. Activity is switched upon resveratrol-binding: resveratrol strongly inhibits the tyrosine--tRNA ligase activity and promotes relocalization to the nucleus, where YARS1 specifically stimulates the poly-ADP-ribosyltransferase activity of PARP1. This is Tyrosine--tRNA ligase, cytoplasmic (Yars1) from Rattus norvegicus (Rat).